The primary structure comprises 67 residues: DNA gyrase inhibitor YacG (67 aa).

Residues Cys10, Cys13, Cys29, and Cys33 each coordinate Zn(2+).

Belongs to the DNA gyrase inhibitor YacG family. As to quaternary structure, interacts with GyrB. Requires Zn(2+) as cofactor.

Its function is as follows. Inhibits all the catalytic activities of DNA gyrase by preventing its interaction with DNA. Acts by binding directly to the C-terminal domain of GyrB, which probably disrupts DNA binding by the gyrase. The protein is DNA gyrase inhibitor YacG of Pasteurella multocida (strain Pm70).